The chain runs to 471 residues: Transcription initiation factor TFIID subunit 7-like (471 aa).

Disordered regions lie at residues 1-84 (MERG…RQGT), 192-211 (SPEG…TGPT), and 328-377 (EMMG…EELE). Ser199 carries the post-translational modification Phosphoserine. The segment covering 347 to 377 (GDDDDDEDEDDEDYGNEKEEEETDNSEEELE) has biased composition (acidic residues). Residues 358-433 (EDYGNEKEEE…QKELLRKVEN (76 aa)) adopt a coiled-coil conformation.

Belongs to the TAF7 family. TFIID is composed of TATA binding protein (TBP) and a number of TBP-associated factors (TAFs). TAF7L may replace TAF7 in a spermatogenesis-specific form of TFIID. Interacts with TBP; the interaction occurs in a sub-population of cells (pachytene and haploid round spermatids) and is developmentally regulated through differential intracellular localization of the two proteins. Interacts with TAF1. As to expression, testis-specific (at protein level). Expressed during spermatogenesis from spermatogonia stage up to the stage of round spermatids.

Its subcellular location is the nucleus. The protein localises to the cytoplasm. Probably functions as a spermatogenesis-specific component of the DNA-binding general transcription factor complex TFIID, a multimeric protein complex that plays a central role in mediating promoter responses to various activators and repressors. May play a role in spermatogenesis. The chain is Transcription initiation factor TFIID subunit 7-like (Taf7l) from Mus musculus (Mouse).